The sequence spans 506 residues: ATP synthase subunit alpha (506 aa).

Residue 171–178 (GDRQTGKT) participates in ATP binding.

It belongs to the ATPase alpha/beta chains family. As to quaternary structure, F-type ATPases have 2 components, CF(1) - the catalytic core - and CF(0) - the membrane proton channel. CF(1) has five subunits: alpha(3), beta(3), gamma(1), delta(1), epsilon(1). CF(0) has four main subunits: a(1), b(1), b'(1) and c(9-12).

Its subcellular location is the cellular thylakoid membrane. It catalyses the reaction ATP + H2O + 4 H(+)(in) = ADP + phosphate + 5 H(+)(out). Its function is as follows. Produces ATP from ADP in the presence of a proton gradient across the membrane. The alpha chain is a regulatory subunit. This Nostoc sp. (strain PCC 7120 / SAG 25.82 / UTEX 2576) protein is ATP synthase subunit alpha.